The following is a 71-amino-acid chain: UPF0434 protein Csal_1588 (71 aa).

This sequence belongs to the UPF0434 family.

The sequence is that of UPF0434 protein Csal_1588 from Chromohalobacter salexigens (strain ATCC BAA-138 / DSM 3043 / CIP 106854 / NCIMB 13768 / 1H11).